The sequence spans 754 residues: Elongation factor G-2, mitochondrial (754 aa).

One can recognise a tr-type G domain in the interval 63–340 (DKLRNIGISA…GVVSFLPSPN (278 aa)). Residues 72–79 (AHIDSGKT), 139–143 (DTPGH), and 193–196 (NKLD) each bind GTP.

This sequence belongs to the TRAFAC class translation factor GTPase superfamily. Classic translation factor GTPase family. EF-G/EF-2 subfamily. In terms of tissue distribution, expressed in cotyledons and adult leaves at the same levels.

The protein localises to the mitochondrion. The protein operates within protein biosynthesis; polypeptide chain elongation. In terms of biological role, mitochondrial GTPase that catalyzes the GTP-dependent ribosomal translocation step during translation elongation. During this step, the ribosome changes from the pre-translocational (PRE) to the post-translocational (POST) state as the newly formed A-site-bound peptidyl-tRNA and P-site-bound deacylated tRNA move to the P and E sites, respectively. Catalyzes the coordinated movement of the two tRNA molecules, the mRNA and conformational changes in the ribosome. The polypeptide is Elongation factor G-2, mitochondrial (MEFG2) (Arabidopsis thaliana (Mouse-ear cress)).